The chain runs to 338 residues: Lipoate-protein ligase A (338 aa).

One can recognise a BPL/LPL catalytic domain in the interval 29-216 (PATQRVLFLW…AFFAHYGERV (188 aa)). Residues arginine 71, 76–79 (GAVF), and lysine 134 each bind ATP. Lysine 134 contacts (R)-lipoate.

It belongs to the LplA family. As to quaternary structure, monomer.

The protein resides in the cytoplasm. The enzyme catalyses L-lysyl-[lipoyl-carrier protein] + (R)-lipoate + ATP = N(6)-[(R)-lipoyl]-L-lysyl-[lipoyl-carrier protein] + AMP + diphosphate + H(+). The protein operates within protein modification; protein lipoylation via exogenous pathway; protein N(6)-(lipoyl)lysine from lipoate: step 1/2. It participates in protein modification; protein lipoylation via exogenous pathway; protein N(6)-(lipoyl)lysine from lipoate: step 2/2. Functionally, catalyzes both the ATP-dependent activation of exogenously supplied lipoate to lipoyl-AMP and the transfer of the activated lipoyl onto the lipoyl domains of lipoate-dependent enzymes. The polypeptide is Lipoate-protein ligase A (Salmonella choleraesuis (strain SC-B67)).